The primary structure comprises 342 residues: Zinc transporter ZIP11 (342 aa).

Helical transmembrane passes span 12–32, 44–64, 72–92, 194–214, 263–285, 290–307, and 322–342; these read LLGT…VFVF, LGFA…APAV, GFGA…AAFV, IALL…AVGV, FWYG…FAVV, ILPY…YVVM, and LASW…VGLG.

This sequence belongs to the ZIP transporter (TC 2.A.5) family.

The protein localises to the cell membrane. It is found in the nucleus. It localises to the cytoplasm. The protein resides in the golgi apparatus. It carries out the reaction Zn(2+)(in) = Zn(2+)(out). It catalyses the reaction Cu(2+)(in) = Cu(2+)(out). In terms of biological role, zinc importer that regulates cytosolic zinc concentrations either via zinc influx from the extracellular compartment or efflux from intracellular organelles such as Golgi apparatus. May transport copper ions as well. The transport mechanism remains to be elucidated. This is Zinc transporter ZIP11 (SLC39A11) from Homo sapiens (Human).